Consider the following 93-residue polypeptide: Microcin N immunity protein (93 aa).

A run of 3 helical transmembrane segments spans residues 3-23 (FLNF…FIVW), 36-56 (LSII…NYKI), and 68-88 (LFCF…YFIL).

It belongs to the MceB microcin immunity protein family.

The protein localises to the cell inner membrane. Its function is as follows. Probably able to protect the producing cell against microcin N (microcin 24). The protein is Microcin N immunity protein of Escherichia coli.